The primary structure comprises 445 residues: Tubulin beta chain (445 aa).

Residues Gln11, Glu69, Ser138, Gly142, Thr143, Gly144, Asn204, and Asn226 each contribute to the GTP site. Residue Glu69 participates in Mg(2+) binding. Positions 426–445 (QDATAEEEGEFEEEEGDVEA) are disordered. A compositionally biased stretch (acidic residues) spans 429 to 445 (TAEEEGEFEEEEGDVEA).

It belongs to the tubulin family. In terms of assembly, dimer of alpha and beta chains. A typical microtubule is a hollow water-filled tube with an outer diameter of 25 nm and an inner diameter of 15 nM. Alpha-beta heterodimers associate head-to-tail to form protofilaments running lengthwise along the microtubule wall with the beta-tubulin subunit facing the microtubule plus end conferring a structural polarity. Microtubules usually have 13 protofilaments but different protofilament numbers can be found in some organisms and specialized cells. Interacts with DCX/apicortin; the interaction stabilizes microtubule assembly. It depends on Mg(2+) as a cofactor.

Its subcellular location is the cytoplasm. It localises to the cytoskeleton. In terms of biological role, tubulin is the major constituent of microtubules, a cylinder consisting of laterally associated linear protofilaments composed of alpha- and beta-tubulin heterodimers. Microtubules grow by the addition of GTP-tubulin dimers to the microtubule end, where a stabilizing cap forms. Below the cap, tubulin dimers are in GDP-bound state, owing to GTPase activity of alpha-tubulin. This chain is Tubulin beta chain, found in Plasmodium falciparum.